Here is a 122-residue protein sequence, read N- to C-terminus: Large ribosomal subunit protein uL14 (122 aa).

The protein belongs to the universal ribosomal protein uL14 family. In terms of assembly, part of the 50S ribosomal subunit. Forms a cluster with proteins L3 and L19. In the 70S ribosome, L14 and L19 interact and together make contacts with the 16S rRNA in bridges B5 and B8.

Its function is as follows. Binds to 23S rRNA. Forms part of two intersubunit bridges in the 70S ribosome. The protein is Large ribosomal subunit protein uL14 of Streptococcus gordonii (strain Challis / ATCC 35105 / BCRC 15272 / CH1 / DL1 / V288).